Consider the following 413-residue polypeptide: Exodeoxyribonuclease 7 large subunit (413 aa).

It belongs to the XseA family. As to quaternary structure, heterooligomer composed of large and small subunits.

Its subcellular location is the cytoplasm. It catalyses the reaction Exonucleolytic cleavage in either 5'- to 3'- or 3'- to 5'-direction to yield nucleoside 5'-phosphates.. Its function is as follows. Bidirectionally degrades single-stranded DNA into large acid-insoluble oligonucleotides, which are then degraded further into small acid-soluble oligonucleotides. This chain is Exodeoxyribonuclease 7 large subunit, found in Corynebacterium efficiens (strain DSM 44549 / YS-314 / AJ 12310 / JCM 11189 / NBRC 100395).